Here is a 402-residue protein sequence, read N- to C-terminus: Probable tRNA pseudouridine synthase tag-124 (402 aa).

Asp85 functions as the Nucleophile in the catalytic mechanism. Positions 383–402 (SKKEKMAEKKKNGEESSDKL) are disordered.

It belongs to the tRNA pseudouridine synthase TruA family.

The enzyme catalyses a uridine in tRNA = a pseudouridine in tRNA. Formation of pseudouridine at position 38 and 39 in the anticodon stem and loop of transfer RNAs. The polypeptide is Probable tRNA pseudouridine synthase tag-124 (tag-124) (Caenorhabditis elegans).